The sequence spans 561 residues: Carbohydrate sulfotransferase 15 (561 aa).

The Cytoplasmic segment spans residues Met-1–Cys-80. A helical; Signal-anchor for type II membrane protein membrane pass occupies residues Ser-81 to Ala-101. Residues His-102 to Thr-561 are Lumenal-facing. Residue Lys-263–Thr-267 participates in 3'-phosphoadenylyl sulfate binding. Residue Asn-364 is glycosylated (N-linked (GlcNAc...) asparagine). 3'-phosphoadenylyl sulfate-binding residues include Arg-392 and Ser-400.

The protein belongs to the sulfotransferase 1 family. Homodimer; disulfide-linked (Potential). The relevance of homodimerization is however unsure. May interact with phosphorylated proteins in resting B-cells, including HCK. A divalent metal cation serves as cofactor. Glutathione is required as a cofactor. Glycosylated.

Its subcellular location is the golgi apparatus membrane. The enzyme catalyses dermatan 4'-sulfate + n 3'-phosphoadenylyl sulfate = dermatan 4',6'-bissulfate + n adenosine 3',5'-bisphosphate + n H(+). It carries out the reaction chondroitin 4'-sulfate + n 3'-phosphoadenylyl sulfate = chondroitin 4',6'-bissulfate + n adenosine 3',5'-bisphosphate + n H(+). Its activity is regulated as follows. Inhibited by phenyl beta-GalNAc(4,6-SO(4)). In terms of biological role, sulfotransferase that transfers sulfate from 3'-phosphoadenosine 5'-phosphosulfate (PAPS) to the C-6 hydroxyl group of the GalNAc 4-sulfate residue of chondroitin sulfate A and forms chondroitin sulfate E containing GlcA-GalNAc(4,6-SO(4)) repeating units. It also transfers sulfate to a unique non-reducing terminal sequence, GalNAc(4SO4)-GlcA(2SO4)-GalNAc(6SO4), to yield a highly sulfated structure similar to the structure found in thrombomodulin chondroitin sulfate. May also act as a B-cell receptor involved in BCR ligation-mediated early activation that mediate regulatory signals key to B-cell development and/or regulation of B-cell-specific RAG expression; however such results are unclear in vivo. The polypeptide is Carbohydrate sulfotransferase 15 (Chst15) (Mus musculus (Mouse)).